Here is a 386-residue protein sequence, read N- to C-terminus: Formate-dependent phosphoribosylglycinamide formyltransferase (386 aa).

Residues 10-11 and glutamate 70 contribute to the N(1)-(5-phospho-beta-D-ribosyl)glycinamide site; that span reads EL. Residues arginine 102, lysine 143, 148 to 153, 183 to 186, and glutamate 191 each bind ATP; these read SSGKGQ and EAFV. The ATP-grasp domain maps to 107-298; that stretch reads DLAAKELGLK…EFELHLRAIL (192 aa). Glutamate 256 and glutamate 268 together coordinate Mg(2+). N(1)-(5-phospho-beta-D-ribosyl)glycinamide-binding positions include aspartate 275, lysine 346, and 353–354; that span reads RR.

Belongs to the PurK/PurT family. Homodimer.

The enzyme catalyses N(1)-(5-phospho-beta-D-ribosyl)glycinamide + formate + ATP = N(2)-formyl-N(1)-(5-phospho-beta-D-ribosyl)glycinamide + ADP + phosphate + H(+). It participates in purine metabolism; IMP biosynthesis via de novo pathway; N(2)-formyl-N(1)-(5-phospho-D-ribosyl)glycinamide from N(1)-(5-phospho-D-ribosyl)glycinamide (formate route): step 1/1. Involved in the de novo purine biosynthesis. Catalyzes the transfer of formate to 5-phospho-ribosyl-glycinamide (GAR), producing 5-phospho-ribosyl-N-formylglycinamide (FGAR). Formate is provided by PurU via hydrolysis of 10-formyl-tetrahydrofolate. The sequence is that of Formate-dependent phosphoribosylglycinamide formyltransferase from Flavobacterium psychrophilum (strain ATCC 49511 / DSM 21280 / CIP 103535 / JIP02/86).